An 81-amino-acid polypeptide reads, in one-letter code: Three-finger toxin A1 (81 aa).

Positions 1–21 (MKTLLLTLVVVTIVCLDFGHT) are cleaved as a signal peptide. 4 disulfides stabilise this stretch: cysteine 24/cysteine 43, cysteine 38/cysteine 60, cysteine 62/cysteine 73, and cysteine 74/cysteine 79.

The protein belongs to the three-finger toxin family. Short-chain subfamily. Type I alpha-neurotoxin sub-subfamily. In terms of tissue distribution, expressed by the venom gland.

The protein resides in the secreted. Binds and inhibits fetal (alpha-1-beta-1-gamma-delta/CHRNA1-CHRNB1-CHRNG-CHRND, IC(50)=1.4 nM), adult (alpha-1-beta-1-delta-epsilon/CHRNA1-CHRNB1-CHRND-CHRNE, IC(50)=12 nM) and neuronal alpha-7/CHRNA7 (IC(50)=400 nM) nicotinic acetylcholine receptors (nAChR) thereby impairing neuromuscular and neuronal transmissions. The sequence is that of Three-finger toxin A1 from Micrurus laticollaris (Balsas coral snake).